The primary structure comprises 461 residues: Bifunctional protein HldE (461 aa).

The segment at 1–312 (MLEFLSQQKP…IKSFNRVDFE (312 aa)) is ribokinase. Residue 191-194 (NKKE) coordinates ATP. The active site involves D259. The tract at residues 334–461 (FTNGCFDIVH…KIIEKIKDKK (128 aa)) is cytidylyltransferase.

In the N-terminal section; belongs to the carbohydrate kinase PfkB family. This sequence in the C-terminal section; belongs to the cytidylyltransferase family. Homodimer.

It catalyses the reaction D-glycero-beta-D-manno-heptose 7-phosphate + ATP = D-glycero-beta-D-manno-heptose 1,7-bisphosphate + ADP + H(+). It carries out the reaction D-glycero-beta-D-manno-heptose 1-phosphate + ATP + H(+) = ADP-D-glycero-beta-D-manno-heptose + diphosphate. The protein operates within nucleotide-sugar biosynthesis; ADP-L-glycero-beta-D-manno-heptose biosynthesis; ADP-L-glycero-beta-D-manno-heptose from D-glycero-beta-D-manno-heptose 7-phosphate: step 1/4. Its pathway is nucleotide-sugar biosynthesis; ADP-L-glycero-beta-D-manno-heptose biosynthesis; ADP-L-glycero-beta-D-manno-heptose from D-glycero-beta-D-manno-heptose 7-phosphate: step 3/4. Catalyzes the phosphorylation of D-glycero-D-manno-heptose 7-phosphate at the C-1 position to selectively form D-glycero-beta-D-manno-heptose-1,7-bisphosphate. In terms of biological role, catalyzes the ADP transfer from ATP to D-glycero-beta-D-manno-heptose 1-phosphate, yielding ADP-D-glycero-beta-D-manno-heptose. In Campylobacter jejuni subsp. doylei (strain ATCC BAA-1458 / RM4099 / 269.97), this protein is Bifunctional protein HldE.